A 591-amino-acid chain; its full sequence is MAGELRGSRGPLQRIQIAPREAPNLHLTMGNWLVNHWLSVLFLVSWLGLNIFLFVYAFLNYEKSDKYYYTREILGTALALARASALCLNFNSMMILIPVCRNLLSFLRGTCSFCNRTLRKPLDHNLTFHKLVAYMICIFTVIHIIAHLFNFERYRRSQQAMDGSLASVLSSLSHPEKEDSWLNPIQSPNMTVMYAAFTSIAGLTGVIATVALVLMVTSAMEFIRRNYFELFWYTHHLFIVYIICLGIHGLGGIVRGQTEESLGESHPHNCSHSFHEWDDHKGSCRHPHFAGHPPESWKWILAPIAFYIFERILRFYRSQQKVVITKVVMHPSNVLELQMRKRGFSMEVGQYIFVNCPSISFLEWHPFTLTSAPEEEFFSVHIRAAGDWTRNLIRTFEQQHSPMPRIEVDGPFGTVSEDVFQYEVAVLVGAGIGVTPFASILKSIWYKFQRADNKLKTQKIYFYWICRETGAFAWFNNLLNSLEQEMEELGKMDFLNYRLFLTGWDSNIAGHAALNFDRATDILTGLKQKTSFGRPMWDNEFSRIATAHPKSAVGVFLCGPRTLAKSLRKRCQRYSSLDPRKVQFYFNKETF.

The Cytoplasmic segment spans residues 1-36 (MAGELRGSRGPLQRIQIAPREAPNLHLTMGNWLVNH). A helical membrane pass occupies residues 37-59 (WLSVLFLVSWLGLNIFLFVYAFL). Residues 60-72 (NYEKSDKYYYTRE) lie on the Extracellular side of the membrane. Residues 73–97 (ILGTALALARASALCLNFNSMMILI) form a helical membrane-spanning segment. Residues 82-316 (RASALCLNFN…YIFERILRFY (235 aa)) enclose the Ferric oxidoreductase domain. At 98–130 (PVCRNLLSFLRGTCSFCNRTLRKPLDHNLTFHK) the chain is on the cytoplasmic side. H129 and H143 together coordinate heme. A helical transmembrane segment spans residues 131 to 151 (LVAYMICIFTVIHIIAHLFNF). At 152 to 195 (ERYRRSQQAMDGSLASVLSSLSHPEKEDSWLNPIQSPNMTVMYA) the chain is on the extracellular side. N189 carries N-linked (GlcNAc...) asparagine glycosylation. The helical transmembrane segment at 196–216 (AFTSIAGLTGVIATVALVLMV) threads the bilayer. The Cytoplasmic portion of the chain corresponds to 217–234 (TSAMEFIRRNYFELFWYT). The chain crosses the membrane as a helical span at residues 235-255 (HHLFIVYIICLGIHGLGGIVR). Heme-binding residues include H236 and H248. The Extracellular segment spans residues 256–423 (GQTEESLGES…TVSEDVFQYE (168 aa)). N269 carries an N-linked (GlcNAc...) asparagine glycan. The FAD-binding FR-type domain occupies 317-418 (RSQQKVVITK…DGPFGTVSED (102 aa)). 365–371 (HPFTLTS) serves as a coordination point for FAD. A helical membrane pass occupies residues 424–444 (VAVLVGAGIGVTPFASILKSI). Residues 424-563 (VAVLVGAGIG…GVFLCGPRTL (140 aa)) are interaction with NOXO1. The Cytoplasmic portion of the chain corresponds to 445 to 591 (WYKFQRADNK…VQFYFNKETF (147 aa)). Phosphothreonine is present on T457.

In terms of assembly, NOX1, NOXA1, NOXO1, RAC1 and CYBA forms a functional multimeric complex supporting ROS production. Interacts with NOXO1. Interacts (via FAD-binding FR-type domain) with ARHGEF7 (via PH domain). Interacts with NOXA1. FAD serves as cofactor. In terms of processing, phosphorylation at Thr-457 mediated by PKC/PRKBC positively regulates its interaction with NOXA1 and enzyme activity. As to expression, expressed in colon and vascular smooth muscle cells (VSMC).

Its subcellular location is the cell projection. The protein resides in the invadopodium membrane. It is found in the cell membrane. It carries out the reaction NADPH + 2 O2 = 2 superoxide + NADP(+) + H(+). The oxidase activity is potentiated by NOXA1 and NOXO1. NADPH oxidase that catalyzes the generation of superoxide from molecular oxygen utilizing NADPH as an electron donor. The sequence is that of NADPH oxidase 1 (Nox1) from Mus musculus (Mouse).